We begin with the raw amino-acid sequence, 1838 residues long: Nuclear pore complex protein NUP205 (1838 aa).

It belongs to the NUP186/NUP192/NUP205 family. In terms of assembly, part of the nuclear pore complex (NPC). The NPC has an eight-fold symmetrical structure comprising a central transport channel and two rings, the cytoplasmic and nuclear rings, to which eight filaments are attached. The cytoplasmic filaments have loose ends, while the nuclear filaments are joined in a distal ring, forming a nuclear basket. NPCs are highly dynamic in configuration and composition, and can be devided in 3 subcomplexes, the NUP62 subcomplex, the NUP107-160 subcomplex and the NUP93 subcomplex, containing approximately 30 different nucleoporin proteins.

The protein resides in the nucleus envelope. It is found in the nucleus. The protein localises to the nuclear pore complex. This Arabidopsis thaliana (Mouse-ear cress) protein is Nuclear pore complex protein NUP205.